The following is a 212-amino-acid chain: Putative tyrosine-protein phosphatase OCA1 (212 aa).

A disordered region spans residues 1–27 (MSNKDTSILKGNVDHEEADSNPKLRKI). Residues 12 to 22 (NVDHEEADSNP) show a composition bias toward basic and acidic residues. The region spanning 40–208 (NFCPVERQLY…SVEIDPSKVP (169 aa)) is the Tyrosine-protein phosphatase domain. Cys-146 functions as the Phosphocysteine intermediate in the catalytic mechanism.

This sequence belongs to the protein-tyrosine phosphatase family.

It is found in the cytoplasm. The catalysed reaction is O-phospho-L-tyrosyl-[protein] + H2O = L-tyrosyl-[protein] + phosphate. Its function is as follows. Putative tyrosine-protein phosphatase required for protection against superoxide stress. The sequence is that of Putative tyrosine-protein phosphatase OCA1 (OCA1) from Scheffersomyces stipitis (strain ATCC 58785 / CBS 6054 / NBRC 10063 / NRRL Y-11545) (Yeast).